Here is a 379-residue protein sequence, read N- to C-terminus: Glucose-1-phosphate adenylyltransferase (379 aa).

Alpha-D-glucose 1-phosphate contacts are provided by residues Tyr-99, Gly-164, 179-180 (EK), and Ser-190.

It belongs to the bacterial/plant glucose-1-phosphate adenylyltransferase family. Homotetramer.

The catalysed reaction is alpha-D-glucose 1-phosphate + ATP + H(+) = ADP-alpha-D-glucose + diphosphate. It functions in the pathway glycan biosynthesis; glycogen biosynthesis. Involved in the biosynthesis of ADP-glucose, a building block required for the elongation reactions to produce glycogen. Catalyzes the reaction between ATP and alpha-D-glucose 1-phosphate (G1P) to produce pyrophosphate and ADP-Glc. This Bacillus licheniformis (strain ATCC 14580 / DSM 13 / JCM 2505 / CCUG 7422 / NBRC 12200 / NCIMB 9375 / NCTC 10341 / NRRL NRS-1264 / Gibson 46) protein is Glucose-1-phosphate adenylyltransferase.